A 317-amino-acid chain; its full sequence is Probable arabinan endo-1,5-alpha-L-arabinosidase C (317 aa).

Residues M1 to A17 form the signal peptide. Residue D32 is the Proton acceptor of the active site. N-linked (GlcNAc...) asparagine glycosylation occurs at N190. The active-site Proton donor is the E198.

This sequence belongs to the glycosyl hydrolase 43 family.

The protein resides in the secreted. It catalyses the reaction Endohydrolysis of (1-&gt;5)-alpha-arabinofuranosidic linkages in (1-&gt;5)-arabinans.. The protein operates within glycan metabolism; L-arabinan degradation. In terms of biological role, endo-1,5-alpha-L-arabinanase involved in degradation of pectin. Its preferred substrate is linear 1,5-alpha-L-arabinan. This Aspergillus flavus (strain ATCC 200026 / FGSC A1120 / IAM 13836 / NRRL 3357 / JCM 12722 / SRRC 167) protein is Probable arabinan endo-1,5-alpha-L-arabinosidase C (abnC).